The sequence spans 392 residues: Branched-chain-amino-acid aminotransferase, mitochondrial (392 aa).

The transit peptide at 1–27 (MAAAALGQIWARKLLSVPWLLCGPRRY) directs the protein to the mitochondrion. Tyrosine 168 provides a ligand contact to substrate. Lysine 229 is subject to N6-(pyridoxal phosphate)lysine. At lysine 321 the chain carries N6-acetyllysine.

Belongs to the class-IV pyridoxal-phosphate-dependent aminotransferase family. As to quaternary structure, homodimer. The cofactor is pyridoxal 5'-phosphate. Ubiquitous.

Its subcellular location is the mitochondrion. The enzyme catalyses L-leucine + 2-oxoglutarate = 4-methyl-2-oxopentanoate + L-glutamate. It carries out the reaction L-isoleucine + 2-oxoglutarate = (S)-3-methyl-2-oxopentanoate + L-glutamate. It catalyses the reaction L-valine + 2-oxoglutarate = 3-methyl-2-oxobutanoate + L-glutamate. In terms of biological role, catalyzes the first reaction in the catabolism of the essential branched chain amino acids leucine, isoleucine, and valine. May also function as a transporter of branched chain alpha-keto acids. The protein is Branched-chain-amino-acid aminotransferase, mitochondrial (BCAT2) of Homo sapiens (Human).